Reading from the N-terminus, the 174-residue chain is Caltractin ICL1e (174 aa).

The segment at 1–33 (MSKKQQAPVAQKPVGKQQQVNRKPQDRPGLTED) is disordered. EF-hand domains are found at residues 33-68 (DEIE…LGFD), 88-103 (IDFD…KLGN), 105-140 (ESRD…LGET), and 141-174 (MTAE…KRTF).

This sequence belongs to the centrin family. As to quaternary structure, monomer.

Its subcellular location is the cytoplasm. It is found in the cytoskeleton. In terms of biological role, plays a fundamental role in microtubule organizing center structure and function. Component of the infraciliary lattice (ICL) and the ciliary basal bodies. This is Caltractin ICL1e (Icl1e) from Paramecium tetraurelia.